The primary structure comprises 659 residues: Homeobox protein slou (659 aa).

The span at 1–21 (MVMLQSPAQKASDSASAQNTA) shows a compositional bias: polar residues. Disordered regions lie at residues 1 to 63 (MVML…PAAK), 94 to 152 (MSSE…SFSS), 198 to 298 (AQQH…AAPS), 316 to 349 (TQASSTSALASASNSVSNASISISNSSSGSPSGR), 376 to 440 (QIAA…DRDA), and 455 to 548 (PNKF…PRRA). Composition is skewed to low complexity over residues 27-51 (SPNSNPDSPKSNTSPDVASADSVVS), 95-108 (SSESGSLLSRLSPL), and 120-135 (HNNNNSLTNHNANSNT). Residues 136-152 (RRSQSPPASVGSVSFSS) are compositionally biased toward polar residues. Over residues 201–232 (HMHHHQHQHHQHPAHPHSHQHPHPHPHPHPHP) the composition is skewed to basic residues. Tandem repeats lie at residues 221-222 (HP), 223-224 (HP), 225-226 (HP), 227-228 (HP), 229-230 (HP), 231-232 (HP), and 233-234 (HP). The tract at residues 221 to 234 (HPHPHPHPHPHPHP) is 7 X 2 AA tandem repeats of H-P. Composition is skewed to pro residues over residues 250 to 263 (PPSPATSPLSPPTS) and 275 to 286 (PIAPPQNPPHSS). Composition is skewed to low complexity over residues 287 to 298 (QPPQQQQVAAPS) and 316 to 347 (TQASSTSALASASNSVSNASISISNSSSGSPS). Residues 388–401 (SEELNVDGNDEDSN) show a composition bias toward acidic residues. The span at 417 to 435 (RSVNSSAAANPSSASTSAS) shows a compositional bias: low complexity. Acidic residues-rich tracts occupy residues 478–492 (RDEEMQERLDDDQSE) and 500–519 (NDMDQDDMCDDGSDIDDPSS). The span at 528–543 (SRNGDGKSGGGGGGGS) shows a compositional bias: gly residues. The segment at residues 545–604 (PRRARTAFTYEQLVSLENKFKTTRYLSVCERLNLALSLSLTETQVKIWFQNRRTKWKKQN) is a DNA-binding region (homeobox).

Belongs to the NK-1 homeobox family. In terms of tissue distribution, mesodermal precursor cells of distinct muscles during embryogenesis, a subset of neuronal cells of the CNS and their precursors and also in cells of a small region of the midgut.

Its subcellular location is the nucleus. May play a role in specifying the identity of particular somatic muscles and neurons of the CNS. The polypeptide is Homeobox protein slou (slou) (Drosophila melanogaster (Fruit fly)).